We begin with the raw amino-acid sequence, 454 residues long: Bifunctional protein GlmU (454 aa).

The pyrophosphorylase stretch occupies residues 1–226 (MLAVAVLAAG…PDEVNGINNR (226 aa)). UDP-N-acetyl-alpha-D-glucosamine contacts are provided by residues 7–10 (LAAG), K21, Q73, and 78–79 (GT). D103 is a Mg(2+) binding site. The UDP-N-acetyl-alpha-D-glucosamine site is built by G140, E155, N170, and N224. Residue N224 participates in Mg(2+) binding. Residues 227-247 (RQLAQCEGVLQQRLRDHWMDE) form a linker region. An N-acetyltransferase region spans residues 248–454 (GVTFVDPASC…WDRNTQAAQS (207 aa)). 2 residues coordinate UDP-N-acetyl-alpha-D-glucosamine: R329 and K347. H359 (proton acceptor) is an active-site residue. UDP-N-acetyl-alpha-D-glucosamine-binding residues include Y362 and N373. Residues A376, A419, and R436 each coordinate acetyl-CoA.

This sequence in the N-terminal section; belongs to the N-acetylglucosamine-1-phosphate uridyltransferase family. In the C-terminal section; belongs to the transferase hexapeptide repeat family. Homotrimer. Mg(2+) serves as cofactor.

It is found in the cytoplasm. It carries out the reaction alpha-D-glucosamine 1-phosphate + acetyl-CoA = N-acetyl-alpha-D-glucosamine 1-phosphate + CoA + H(+). The catalysed reaction is N-acetyl-alpha-D-glucosamine 1-phosphate + UTP + H(+) = UDP-N-acetyl-alpha-D-glucosamine + diphosphate. It functions in the pathway nucleotide-sugar biosynthesis; UDP-N-acetyl-alpha-D-glucosamine biosynthesis; N-acetyl-alpha-D-glucosamine 1-phosphate from alpha-D-glucosamine 6-phosphate (route II): step 2/2. It participates in nucleotide-sugar biosynthesis; UDP-N-acetyl-alpha-D-glucosamine biosynthesis; UDP-N-acetyl-alpha-D-glucosamine from N-acetyl-alpha-D-glucosamine 1-phosphate: step 1/1. Its pathway is bacterial outer membrane biogenesis; LPS lipid A biosynthesis. In terms of biological role, catalyzes the last two sequential reactions in the de novo biosynthetic pathway for UDP-N-acetylglucosamine (UDP-GlcNAc). The C-terminal domain catalyzes the transfer of acetyl group from acetyl coenzyme A to glucosamine-1-phosphate (GlcN-1-P) to produce N-acetylglucosamine-1-phosphate (GlcNAc-1-P), which is converted into UDP-GlcNAc by the transfer of uridine 5-monophosphate (from uridine 5-triphosphate), a reaction catalyzed by the N-terminal domain. This is Bifunctional protein GlmU from Synechococcus sp. (strain CC9311).